A 425-amino-acid chain; its full sequence is Neuromedin-U receptor 1 (425 aa).

Topologically, residues 1–59 (MTPPCLNCSFFPGQLSPNASTGLLSCNDSEFKEHFDLEDLNLTHEDLRLKYLGPQQVKQ) are extracellular. N-linked (GlcNAc...) asparagine glycosylation is present at asparagine 41. The chain crosses the membrane as a helical span at residues 60–80 (FLPICVTYLLIFVVGTLGNGL). Residues 81 to 96 (TCTVILRQKAMHTPTN) are Cytoplasmic-facing. Residues 97-117 (FYLFSLAVSDLLVLLVGLPLE) traverse the membrane as a helical segment. Over 118–137 (LYEMQHNYPFQLGAGGCYFR) the chain is Extracellular. A disulfide bond links cysteine 134 and cysteine 219. A helical membrane pass occupies residues 138–158 (ILLLETVCLASVLNVTALSVE). Residues 159 to 181 (RYVAVVHPLQAKSVMTRTHVRRM) lie on the Cytoplasmic side of the membrane. A helical transmembrane segment spans residues 182–202 (LGAIWVFAILFSLPNTSLHGL). The Extracellular portion of the chain corresponds to 203-235 (SPLYVPCRGPVPDSVTCTLVRPQFFYKLVIQTT). The chain crosses the membrane as a helical span at residues 236–256 (ILLFFCLPMVTISVLYLLIGL). The Cytoplasmic segment spans residues 257–294 (RLRRERILLQEEVKGRISAAARQASHRSIQLRDRERRQ). Residues 295-315 (VTKMLIALVIVFGTCWVPFHA) traverse the membrane as a helical segment. Residues 316–331 (DRLMWSMVSHWTDGLR) are Extracellular-facing. Residues 332–352 (LAFQSVHLASGVFLYLGSAAN) traverse the membrane as a helical segment. The Cytoplasmic segment spans residues 353-425 (PVLYNLMSTR…GCEQETDPPE (73 aa)). A disordered region spans residues 406–425 (DVPLAENRDPGCEQETDPPE).

It belongs to the G-protein coupled receptor 1 family. In terms of tissue distribution, highly expressed in the small intestine and lung. Low expression in the central nervous system.

It localises to the cell membrane. In terms of biological role, receptor for the neuromedin-U and neuromedin-S neuropeptides. The chain is Neuromedin-U receptor 1 (Nmur1) from Rattus norvegicus (Rat).